The following is a 294-amino-acid chain: Ribosomal protein L11 methyltransferase (294 aa).

S-adenosyl-L-methionine contacts are provided by threonine 145, glycine 166, aspartate 188, and asparagine 227.

This sequence belongs to the methyltransferase superfamily. PrmA family.

Its subcellular location is the cytoplasm. The enzyme catalyses L-lysyl-[protein] + 3 S-adenosyl-L-methionine = N(6),N(6),N(6)-trimethyl-L-lysyl-[protein] + 3 S-adenosyl-L-homocysteine + 3 H(+). Its function is as follows. Methylates ribosomal protein L11. This chain is Ribosomal protein L11 methyltransferase, found in Hydrogenovibrio crunogenus (strain DSM 25203 / XCL-2) (Thiomicrospira crunogena).